Consider the following 451-residue polypeptide: Mannan endo-1,6-alpha-mannosidase DCW1 (451 aa).

Residues 1-21 (MLAVTFTAAAVLSLLAASGRT) form the signal peptide. 6 N-linked (GlcNAc...) asparagine glycosylation sites follow: asparagine 84, asparagine 109, asparagine 203, asparagine 242, asparagine 267, and asparagine 291. The disordered stretch occupies residues 397-419 (AMNGGTSPGDPAAGTKTKAENLP). Residue aspartate 427 is the site of GPI-anchor amidated aspartate attachment. A propeptide spans 428 to 451 (RAGAGIITALIGSSFLACTLWLII) (removed in mature form).

This sequence belongs to the glycosyl hydrolase 76 family.

The protein resides in the secreted. It is found in the cell wall. The protein localises to the cell membrane. The catalysed reaction is Random hydrolysis of (1-&gt;6)-alpha-D-mannosidic linkages in unbranched (1-&gt;6)-mannans.. Functionally, required for normal synthesis of the cell wall. The sequence is that of Mannan endo-1,6-alpha-mannosidase DCW1 (DCW1) from Eremothecium gossypii (strain ATCC 10895 / CBS 109.51 / FGSC 9923 / NRRL Y-1056) (Yeast).